A 493-amino-acid polypeptide reads, in one-letter code: Involucrin (493 aa).

Disordered stretches follow at residues 1–47, 60–123, and 139–493; these read MSQQ…CQKV, EEKH…GQLE, and KRDE…GQHE. A compositionally biased stretch (low complexity) spans 76–89; that stretch reads EQQQPQEQELQQQH. Basic and acidic residues-rich tracts occupy residues 90-116, 139-151, 161-174, 184-193, and 201-213; these read WEQDKEHQKAENPEQQLKQEKVQREKQ, KRDEQLGTKKEQL, QLKHLEQEEGHLEL, NLEHQEKPLE, and QLKHLEQQEKPLE. The segment covering 228–240 has biased composition (polar residues); sequence QEGQSELPEQQRG. 5 stretches are compositionally biased toward basic and acidic residues: residues 250–270, 282–360, 372–386, 411–431, and 439–450; these read GQLKHLEEQKGQLKHLEHEEG, KHLE…HEGQ, KHLEQEEKQLEHPEQ, KHLEQQEKQLEHPQQQEEQLK, and QLKDLEQQERQL. Positions 473–493 are enriched in low complexity; it reads GEVLLPVEQQQQKQEVQGQHE.

This sequence belongs to the involucrin family. As to quaternary structure, directly or indirectly cross-linked to cornifelin (CNFN). Substrate of transglutaminase. Specific glutamines or lysines are cross-linked to keratins, desmoplakin and to inter involucrin molecules. As to expression, keratinocytes of epidermis and other stratified squamous epithelia.

The protein localises to the cytoplasm. In terms of biological role, part of the insoluble cornified cell envelope (CE) of stratified squamous epithelia. In Saguinus oedipus (Cotton-top tamarin), this protein is Involucrin (IVL).